The chain runs to 100 residues: Urease subunit gamma (100 aa).

The protein belongs to the urease gamma subunit family. In terms of assembly, heterotrimer of UreA (gamma), UreB (beta) and UreC (alpha) subunits. Three heterotrimers associate to form the active enzyme.

The protein localises to the cytoplasm. The catalysed reaction is urea + 2 H2O + H(+) = hydrogencarbonate + 2 NH4(+). It participates in nitrogen metabolism; urea degradation; CO(2) and NH(3) from urea (urease route): step 1/1. This Yersinia aldovae protein is Urease subunit gamma.